A 100-amino-acid chain; its full sequence is Large ribosomal subunit protein bL21 (100 aa).

It belongs to the bacterial ribosomal protein bL21 family. In terms of assembly, part of the 50S ribosomal subunit. Contacts protein L20.

In terms of biological role, this protein binds to 23S rRNA in the presence of protein L20. This chain is Large ribosomal subunit protein bL21, found in Wolbachia pipientis subsp. Culex pipiens (strain wPip).